Here is a 637-residue protein sequence, read N- to C-terminus: Dihydrolipoyllysine-residue acetyltransferase component of pyruvate dehydrogenase complex, mitochondrial (637 aa).

The N-terminal 85 residues, 1–85 (MWRVCVRRAQ…LLGSPGRRSY (85 aa)), are a transit peptide targeting the mitochondrion. Residues 80-100 (PGRRSYSLPPHQKVPLPSLSP) form a disordered region. Residues 90–166 (HQKVPLPSLS…PIGSIICITV (77 aa)) enclose the Lipoyl-binding 1 domain. S99 carries the phosphoserine modification. The residue at position 131 (K131) is an N6-lipoyllysine. Disordered regions lie at residues 189–219 (QAAA…PPHM) and 307–340 (LKPQ…PAGP). Positions 201 to 211 (AAPTAPSAKAP) are enriched in low complexity. The 70-residue stretch at 218–287 (HMQVSAVGEQ…PLGAPLCIIV (70 aa)) folds into the Lipoyl-binding 2 domain. Positions 310–321 (QAPPPVPPPVAA) are enriched in pro residues. Over residues 322-333 (APPTAQPLAPTP) the composition is skewed to low complexity. Residues 345 to 382 (FVSPLAKKLAAERGIDLTQVKGTGPEGRIIKKDIDSFV) enclose the Peripheral subunit-binding (PSBD) domain. Position 451 (R451) interacts with CoA. The residue at position 456 (K456) is an N6-acetyllysine. K463 is subject to N6-succinyllysine. S465 provides a ligand contact to CoA. K537 carries the post-translational modification N6-succinyllysine. Residues S556, N557, and G581 each contribute to the CoA site. Residues H610 and D614 contribute to the active site.

This sequence belongs to the 2-oxoacid dehydrogenase family. Part of the pyruvate dehydrogenase complex (PDHc) that is a multi-enzyme complex composed of multiple copies of three enzymes, pyruvate dehydrogenase (subunits PDH1A and PDHB, E1 component), dihydrolipoamide acetyltransferase (DLAT, E2 component), and dihydrolipoamide dehydrogenase (DLD, E3 component) to which is added an additional protein the E3-binding protein (PDHX, E3BP). In terms of structural architecture, the E2 and E3BP components assemble into a 60meric central core with icosahedral symmetry. The central core is decorated with E1 and E3 proteins. Currently, two alternative models for the E2:E3BP stoichiometry are considered as being either 48:12 (E2(48)-E3BP(12)) or 40:20 (E2(40)-E3BP(20)). Interacts with PDK2 and PDK3. Interacts with SIRT4. Interacts with PDHB. (R)-lipoate serves as cofactor. In terms of processing, delipoylated at Lys-131 by SIRT4, delipoylation decreases the PHD complex activity. In terms of tissue distribution, detected at higher levels in cauda epididymal spermatazoa than in caput epididymal spermatazoa (at protein level).

The protein localises to the mitochondrion matrix. It carries out the reaction N(6)-[(R)-dihydrolipoyl]-L-lysyl-[protein] + acetyl-CoA = N(6)-[(R)-S(8)-acetyldihydrolipoyl]-L-lysyl-[protein] + CoA. As part of the pyruvate dehydrogenase complex, catalyzes the transfers of an acetyl group to a lipoic acid moiety. The pyruvate dehydrogenase complex, catalyzes the overall conversion of pyruvate to acetyl-CoA and CO(2), and thereby links cytoplasmic glycolysis and the mitochondrial tricarboxylic acid (TCA) cycle. The sequence is that of Dihydrolipoyllysine-residue acetyltransferase component of pyruvate dehydrogenase complex, mitochondrial from Mesocricetus auratus (Golden hamster).